We begin with the raw amino-acid sequence, 71 residues long: uncharacterized protein (71 aa).

This is an uncharacterized protein from Cassava vein mosaic virus (CsVMV).